A 534-amino-acid chain; its full sequence is Phosphoenolpyruvate carboxykinase (ATP) (534 aa).

Positions 59, 200, and 206 each coordinate substrate. ATP-binding positions include Lys206, His225, and 242–250 (GLSGTGKTT). Mn(2+)-binding residues include Lys206 and His225. Position 263 (Asp263) interacts with Mn(2+). ATP-binding positions include Glu291, Arg327, 443 to 444 (RI), and Thr449. Residue Arg327 coordinates substrate.

The protein belongs to the phosphoenolpyruvate carboxykinase (ATP) family. It depends on Mn(2+) as a cofactor.

It is found in the cytoplasm. It carries out the reaction oxaloacetate + ATP = phosphoenolpyruvate + ADP + CO2. The protein operates within carbohydrate biosynthesis; gluconeogenesis. In terms of biological role, involved in the gluconeogenesis. Catalyzes the conversion of oxaloacetate (OAA) to phosphoenolpyruvate (PEP) through direct phosphoryl transfer between the nucleoside triphosphate and OAA. This Agathobacter rectalis (strain ATCC 33656 / DSM 3377 / JCM 17463 / KCTC 5835 / VPI 0990) (Eubacterium rectale) protein is Phosphoenolpyruvate carboxykinase (ATP).